The sequence spans 147 residues: uncharacterized protein (147 aa).

The helical transmembrane segment at 69 to 89 (IFFFLSLYLSSIKIPMLILNI) threads the bilayer.

It localises to the membrane. This is an uncharacterized protein from Saccharomyces cerevisiae (strain ATCC 204508 / S288c) (Baker's yeast).